The chain runs to 308 residues: 3'(2'),5'-bisphosphate nucleotidase 1 (308 aa).

A2 is subject to N-acetylalanine. The Proton acceptor role is filled by D51. Mg(2+) contacts are provided by E74, D117, L119, and D120. The active-site Proton acceptor is T122. T122 carries the phosphothreonine modification. 4 residues coordinate AMP: T195, H198, G220, and K224. At S240 the chain carries Phosphoserine. Position 244 is an N6-succinyllysine (K244). D247 contributes to the Mg(2+) binding site.

It belongs to the inositol monophosphatase superfamily. Mg(2+) serves as cofactor. Widely expressed. Highly expressed in kidney.

The catalysed reaction is adenosine 3',5'-bisphosphate + H2O = AMP + phosphate. It catalyses the reaction adenosine 2',5'-bisphosphate + H2O = AMP + phosphate. The enzyme catalyses 3'-phosphoadenylyl sulfate + H2O = adenosine 5'-phosphosulfate + phosphate. It carries out the reaction 1D-myo-inositol 1,4-bisphosphate + H2O = 1D-myo-inositol 4-phosphate + phosphate. The catalysed reaction is 1D-myo-inositol 1,3,4-trisphosphate + H2O = 1D-myo-inositol 3,4-bisphosphate + phosphate. Uncompetitively inhibited by Li(+) (IC(50)=157 uM). PAP hydrolysis is competitively inhibited by PAPS (IC(50)=0.7 uM) and by inositol 1,4-bisphosphate (IC(50)=15 uM). Phosphatase that converts 3'(2')-phosphoadenosine 5'-phosphate (PAP) to AMP and adenosine 3'-phosphate 5'-phosphosulfate (PAPS) to adenosine 5'-phosphosulfate (APS). Is also able to hydrolyze inositol 1,4-bisphosphate (Ins(1,4)P2) and inositol 1,3,4-trisphosphate (Ins(1,3,4)P3), and is not active on Ins(1)P, Ins(4)P, Ins(3,4)P2, Ins(1,4,5)P3, Ins(1,3,4,5)P4, Ins(1,3,4,5,6)P5 or InsP6. Probably prevents the toxic accumulation of PAP, a compound which inhibits a variety of proteins, including PAPS-utilizing enzymes such as sulfotransferases, and RNA processing enzymes. Could also play a role in inositol recycling and phosphoinositide metabolism. In Mus musculus (Mouse), this protein is 3'(2'),5'-bisphosphate nucleotidase 1 (Bpnt1).